Here is a 130-residue protein sequence, read N- to C-terminus: Small ribosomal subunit protein uS11 (130 aa).

It belongs to the universal ribosomal protein uS11 family. As to quaternary structure, part of the 30S ribosomal subunit. Interacts with proteins S7 and S18. Binds to IF-3.

In terms of biological role, located on the platform of the 30S subunit, it bridges several disparate RNA helices of the 16S rRNA. Forms part of the Shine-Dalgarno cleft in the 70S ribosome. In Gloeothece citriformis (strain PCC 7424) (Cyanothece sp. (strain PCC 7424)), this protein is Small ribosomal subunit protein uS11.